Consider the following 388-residue polypeptide: Chorismate synthase (388 aa).

The NADP(+) site is built by Arg-39 and Arg-45. FMN is bound by residues 130 to 132 (RSS), 251 to 252 (NA), Gly-296, 311 to 315 (KPIPT), and Arg-337.

Belongs to the chorismate synthase family. Homotetramer. FMNH2 is required as a cofactor.

The catalysed reaction is 5-O-(1-carboxyvinyl)-3-phosphoshikimate = chorismate + phosphate. The protein operates within metabolic intermediate biosynthesis; chorismate biosynthesis; chorismate from D-erythrose 4-phosphate and phosphoenolpyruvate: step 7/7. Functionally, catalyzes the anti-1,4-elimination of the C-3 phosphate and the C-6 proR hydrogen from 5-enolpyruvylshikimate-3-phosphate (EPSP) to yield chorismate, which is the branch point compound that serves as the starting substrate for the three terminal pathways of aromatic amino acid biosynthesis. This reaction introduces a second double bond into the aromatic ring system. This chain is Chorismate synthase, found in Streptococcus agalactiae serotype Ia (strain ATCC 27591 / A909 / CDC SS700).